The following is a 363-amino-acid chain: MKYTPLYEEHVKLGAKMVDFAGFNMPIQYTSIKDEVLAVRKNVGMFDVSHMGEVIVEGKDSTKFVDFLITNDFKNLKPGEIVYTAMCNENGGFVDDLLAYKISEEKAMLVINASNIEKDFSWMKKISESFDVTLENKSDEYVLIAVQGPNAQKTLQKITNVDLEQIGYYTFTEGNVLDIKAIISRTGYTGEDGFEIYTTDKDGIIKIWKKLLNLNVIPAGLGARDCLRLEASLLLYGNDMDETITPLEVGIKWAVKFEKDFMGKEALKRQLEEGTSRRLKGFKIIDKGIARHGYKVFKDGKEIGYVTSGTFSPTLNQAIGMALIEKGYKSGEIIEIEIRNKLVKAEIVKMPFYRGSVKSKKKG.

It belongs to the GcvT family. The glycine cleavage system is composed of four proteins: P, T, L and H.

The catalysed reaction is N(6)-[(R)-S(8)-aminomethyldihydrolipoyl]-L-lysyl-[protein] + (6S)-5,6,7,8-tetrahydrofolate = N(6)-[(R)-dihydrolipoyl]-L-lysyl-[protein] + (6R)-5,10-methylene-5,6,7,8-tetrahydrofolate + NH4(+). Its function is as follows. The glycine cleavage system catalyzes the degradation of glycine. The polypeptide is Aminomethyltransferase (Thermosipho melanesiensis (strain DSM 12029 / CIP 104789 / BI429)).